Consider the following 220-residue polypeptide: Deoxyribose-phosphate aldolase (220 aa).

The active-site Proton donor/acceptor is the Asp89. Lys151 acts as the Schiff-base intermediate with acetaldehyde in catalysis. Residue Lys180 is the Proton donor/acceptor of the active site.

The protein belongs to the DeoC/FbaB aldolase family. DeoC type 1 subfamily.

It is found in the cytoplasm. It catalyses the reaction 2-deoxy-D-ribose 5-phosphate = D-glyceraldehyde 3-phosphate + acetaldehyde. Its pathway is carbohydrate degradation; 2-deoxy-D-ribose 1-phosphate degradation; D-glyceraldehyde 3-phosphate and acetaldehyde from 2-deoxy-alpha-D-ribose 1-phosphate: step 2/2. Its function is as follows. Catalyzes a reversible aldol reaction between acetaldehyde and D-glyceraldehyde 3-phosphate to generate 2-deoxy-D-ribose 5-phosphate. In Streptococcus pneumoniae serotype 2 (strain D39 / NCTC 7466), this protein is Deoxyribose-phosphate aldolase.